A 268-amino-acid chain; its full sequence is AN1-type zinc finger protein 1 (268 aa).

Ala2 carries the post-translational modification N-acetylalanine. 2 consecutive AN1-type zinc fingers follow at residues 4 to 52 (LDIG…VVKE) and 58 to 106 (EHKS…VAKP). Zn(2+) contacts are provided by Cys10, Cys15, Cys25, Cys28, Cys33, His36, His42, Cys44, Cys64, Cys69, Cys79, Cys82, Cys87, His90, His96, and Cys98. The ubiquitin-like stretch occupies residues 160-260 (QTERTYFQVY…EYLNDEEQFL (101 aa)).

As to quaternary structure, associates with the 26S proteasome; this association occurs upon exposure to arsenite and is reduced in the presence of ATP. Interacts (via AN1-type 1 and 2 zinc fingers) with PSMD1; this interaction is increased upon arsenite treatment and occurs in an ATP-independent manner. Interacts with PSMC4. Interacts with PSMA1. Interacts (via its ubiquitin-like region) with VCP; this interaction occurs in an arsenite-dependent manner and is necessary for the recruitment of the ubiquitin-selective ATPase VCP to stress granules (SGs).

The protein resides in the cytoplasm. It is found in the stress granule. Plays a role in the regulation of cytoplasmic stress granules (SGs) turnover. SGs are dynamic and transient cytoplasmic ribonucleoprotein assemblies important for cellular protein homeostasis when protein production is suspended after acute exogenous stress. Associates with SGs and is involved in the efficient and specific arsenite-induced clearance process of SGs through the recruitment of the ubiquitin-selective ATPase VCP and the 26S proteasome. This process requires both complexes for efficient degradation of damaged ubiquitinated SG proteins during recovery from arsenite stress, and hence avoiding aberrant cytoplasmic SGs degradation via autophagy. In Mus musculus (Mouse), this protein is AN1-type zinc finger protein 1.